Consider the following 1285-residue polypeptide: Tat-binding homolog 7 (1285 aa).

Disordered stretches follow at residues 1-95 (MARS…LTYR), 121-173 (MSDD…RTRR), 224-243 (GREE…EKEQ), and 258-359 (QEDE…ERGR). Acidic residues-rich tracts occupy residues 226-237 (EEEEEGDEEEAE) and 258-270 (QEDE…ESSE). Over residues 311 to 325 (NRHHRNRNTSNRRRR) the composition is skewed to basic residues. An ATP-binding site is contributed by 446 to 453 (GPPGTGKT). Residues 928–1032 (ALQRQMRMFF…NTFRDAIDDM (105 aa)) enclose the Bromo domain. Positions 1100 to 1196 (EKLKEKLGIS…PTIQSSSSQE (97 aa)) are disordered. The span at 1136–1149 (KLNKKKKDQKRNKK) shows a compositional bias: basic residues. Residues 1155 to 1175 (PDGDDTEETEEAVAENNVDAD) are compositionally biased toward acidic residues.

This sequence belongs to the AAA ATPase family.

Functionally, thought to form a complex that enhances transcription from repetitive DNA sequences by modulating chromatin structure. This is Tat-binding homolog 7 from Caenorhabditis briggsae.